The primary structure comprises 220 residues: Cytidylate kinase (220 aa).

Gly10 to Thr18 is an ATP binding site.

It belongs to the cytidylate kinase family. Type 1 subfamily.

The protein resides in the cytoplasm. It catalyses the reaction CMP + ATP = CDP + ADP. The catalysed reaction is dCMP + ATP = dCDP + ADP. In Lactococcus lactis subsp. cremoris (strain MG1363), this protein is Cytidylate kinase.